The following is a 421-amino-acid chain: GTPase Obg (421 aa).

An Obg domain is found at 1 to 158; sequence MYFIDEAINE…FKIKTELKIL (158 aa). In terms of domain architecture, OBG-type G spans 159-324; it reads ADVGLIGYPS…LKYKMLEMIK (166 aa). Residues 165 to 172, 190 to 194, 211 to 214, 278 to 281, and 305 to 307 each bind GTP; these read GYPSVGKS, FTTLK, DLPG, NKMD, and SLL. Residues S172 and T192 each coordinate Mg(2+). Residues 342-421 enclose the OCT domain; sequence TLEEEKPDFV…ICDRVFEFIT (80 aa).

It belongs to the TRAFAC class OBG-HflX-like GTPase superfamily. OBG GTPase family. In terms of assembly, monomer. It depends on Mg(2+) as a cofactor.

Its subcellular location is the cytoplasm. Functionally, an essential GTPase which binds GTP, GDP and possibly (p)ppGpp with moderate affinity, with high nucleotide exchange rates and a fairly low GTP hydrolysis rate. Plays a role in control of the cell cycle, stress response, ribosome biogenesis and in those bacteria that undergo differentiation, in morphogenesis control. In Phytoplasma mali (strain AT), this protein is GTPase Obg.